A 293-amino-acid chain; its full sequence is Ribosomal protein L11 methyltransferase (293 aa).

S-adenosyl-L-methionine is bound by residues threonine 145, glycine 166, aspartate 188, and asparagine 230.

This sequence belongs to the methyltransferase superfamily. PrmA family.

It is found in the cytoplasm. The catalysed reaction is L-lysyl-[protein] + 3 S-adenosyl-L-methionine = N(6),N(6),N(6)-trimethyl-L-lysyl-[protein] + 3 S-adenosyl-L-homocysteine + 3 H(+). Functionally, methylates ribosomal protein L11. This chain is Ribosomal protein L11 methyltransferase, found in Haemophilus ducreyi (strain 35000HP / ATCC 700724).